The following is a 224-amino-acid chain: Putative homeobox protein R749 (224 aa).

The segment at 139 to 162 is disordered; it reads KTKTIKKSTSEKKTSPKKKTTSQQ. A DNA-binding region (homeobox) is located at residues 161–220; sequence QQIKRVRLSDEERNILESQYSKNNFPSPEIRDELAKKIGKTPRQVQIWFQNKRCKDRKNL.

It localises to the host nucleus. The polypeptide is Putative homeobox protein R749 (Acanthamoeba polyphaga mimivirus (APMV)).